Reading from the N-terminus, the 249-residue chain is Ribosomal RNA small subunit methyltransferase G (249 aa).

S-adenosyl-L-methionine is bound by residues G88, F93, 111–113 (DAT), 139–140 (AE), and R158.

It belongs to the methyltransferase superfamily. RNA methyltransferase RsmG family.

The protein resides in the cytoplasm. Specifically methylates the N7 position of a guanine in 16S rRNA. The chain is Ribosomal RNA small subunit methyltransferase G from Thermus thermophilus (strain ATCC BAA-163 / DSM 7039 / HB27).